A 192-amino-acid chain; its full sequence is Pyridoxal 5'-phosphate synthase subunit PdxT (192 aa).

Residue 53 to 55 (GES) participates in L-glutamine binding. Catalysis depends on Cys82, which acts as the Nucleophile. Residues Arg109 and 137 to 138 (IR) each bind L-glutamine. Residues His173 and Glu175 each act as charge relay system in the active site.

Belongs to the glutaminase PdxT/SNO family. In terms of assembly, in the presence of PdxS, forms a dodecamer of heterodimers. Only shows activity in the heterodimer.

It catalyses the reaction aldehydo-D-ribose 5-phosphate + D-glyceraldehyde 3-phosphate + L-glutamine = pyridoxal 5'-phosphate + L-glutamate + phosphate + 3 H2O + H(+). The enzyme catalyses L-glutamine + H2O = L-glutamate + NH4(+). It functions in the pathway cofactor biosynthesis; pyridoxal 5'-phosphate biosynthesis. In terms of biological role, catalyzes the hydrolysis of glutamine to glutamate and ammonia as part of the biosynthesis of pyridoxal 5'-phosphate. The resulting ammonia molecule is channeled to the active site of PdxS. This chain is Pyridoxal 5'-phosphate synthase subunit PdxT, found in Methanoculleus marisnigri (strain ATCC 35101 / DSM 1498 / JR1).